The primary structure comprises 122 residues: Small ribosomal subunit protein bS6 (122 aa).

The tract at residues Ala-95–Ala-122 is disordered.

Belongs to the bacterial ribosomal protein bS6 family.

In terms of biological role, binds together with bS18 to 16S ribosomal RNA. The protein is Small ribosomal subunit protein bS6 of Ralstonia nicotianae (strain ATCC BAA-1114 / GMI1000) (Ralstonia solanacearum).